The following is a 232-amino-acid chain: Phosphatidylserine decarboxylase proenzyme (232 aa).

Catalysis depends on Ser-190, which acts as the Schiff-base intermediate with substrate; via pyruvic acid. A Pyruvic acid (Ser); by autocatalysis modification is found at Ser-190.

Belongs to the phosphatidylserine decarboxylase family. PSD-A subfamily. In terms of assembly, heterodimer of a large membrane-associated beta subunit and a small pyruvoyl-containing alpha subunit. Requires pyruvate as cofactor. Is synthesized initially as an inactive proenzyme. Formation of the active enzyme involves a self-maturation process in which the active site pyruvoyl group is generated from an internal serine residue via an autocatalytic post-translational modification. Two non-identical subunits are generated from the proenzyme in this reaction, and the pyruvate is formed at the N-terminus of the alpha chain, which is derived from the carboxyl end of the proenzyme. The post-translation cleavage follows an unusual pathway, termed non-hydrolytic serinolysis, in which the side chain hydroxyl group of the serine supplies its oxygen atom to form the C-terminus of the beta chain, while the remainder of the serine residue undergoes an oxidative deamination to produce ammonia and the pyruvoyl prosthetic group on the alpha chain.

It localises to the cell membrane. The enzyme catalyses a 1,2-diacyl-sn-glycero-3-phospho-L-serine + H(+) = a 1,2-diacyl-sn-glycero-3-phosphoethanolamine + CO2. Its pathway is phospholipid metabolism; phosphatidylethanolamine biosynthesis; phosphatidylethanolamine from CDP-diacylglycerol: step 2/2. Functionally, catalyzes the formation of phosphatidylethanolamine (PtdEtn) from phosphatidylserine (PtdSer). This chain is Phosphatidylserine decarboxylase proenzyme, found in Afipia carboxidovorans (strain ATCC 49405 / DSM 1227 / KCTC 32145 / OM5) (Oligotropha carboxidovorans).